The primary structure comprises 1507 residues: Nonribosomal peptide synthetase ataP (1507 aa).

A Carrier 1 domain is found at 1 to 72 (MQINIRNEIA…DIISRSTGMY (72 aa)). An O-(pantetheine 4'-phosphoryl)serine modification is found at Ser33. The disordered stretch occupies residues 98–119 (TPSPSPSGPSTGCPTPDTLDTT). The segment covering 105–115 (GPSTGCPTPDT) has biased composition (low complexity). The tract at residues 163–429 (TRMAWQQVLE…NRVFRQLVQL (267 aa)) is condensation 1. Residues 514 to 893 (AAAENPEACA…GRNDRQIKLR (380 aa)) are adenylation. The 78-residue stretch at 988–1065 (NEMSPTEQRV…DLSQRIDKLQ (78 aa)) folds into the Carrier 2 domain. At Ser1025 the chain carries O-(pantetheine 4'-phosphoryl)serine. The segment at 1099–1471 (TSNTSFTVSF…MTALRLLIKN (373 aa)) is condensation 2.

Belongs to the NRP synthetase family.

It participates in mycotoxin biosynthesis. In terms of biological role, nonribosomal peptide synthetase; part of the gene cluster that mediates the biosynthesis of acetylaranotin, a member of the epipolythiodioxopiperazine (ETP) class of toxins characterized by a disulfide-bridged cyclic dipeptide. The first step of acetylaranotin biosynthesis is performed by the NRPS ataP which produces diketopiperazine cyclo-L-Phe-L-Phe via the condensation of 2 phenylalanines (L-Phe). The ataC domain of ataTC then catalyzes the formation of bishydroxylation of cyclo-L-Phe-L-Phe. The glutathione S-transferase domain ataG in ataIMG further catalyzes the conjugation of two glutathiones to the bishydroxylated intermediate. Next, the dipeptidase ataJ removes the Glu residues. The following step is performed by the carbon sulfur lyase domain ataI of ataIMG which may convert the bis-cysteinyl adduct to yield an epidithiol intermediate. The ataT domain from ataTC then catalyzes the oxidation of the free dithiols, followed by a cyclization step catalyzed by the cytochrome P450 ataF. AtaF probably acts as an epoxidase to promote a dual epoxidation formation at C8 and C9 along with C8' and C9', followed by the spontaneous nucleophilic attack of the amide nitrogens N10 and N10' to yield an intermediate with the pyrrolidine partial structure. The final steps of acetylaranotin biosynthesis involve the acetylation and ring rearrangement of an epitetrathiodiketopiperazine intermediate to produce acetylaranotin. AtaH probably catalyzes the acetylation of epitetrathiodiketopiperazine to produce a diacetate and ataY is responsible for the formation of the dihydrooxepin moiety that converts the diacetate intermediate to acetylaranotin via acetylapoaranotin. Both enzymes could function independently in the absence of the other. The acetylaranotin bis-thiomethyltransferase ataS located outside of acetylaranotin gene cluster is the main thiomethyltransferase responsible for converting acetylaranotin and its related intermediates to their methylated forms. This Aspergillus terreus (strain NIH 2624 / FGSC A1156) protein is Nonribosomal peptide synthetase ataP.